The primary structure comprises 595 residues: DNA mismatch repair protein MutL (595 aa).

It belongs to the DNA mismatch repair MutL/HexB family.

In terms of biological role, this protein is involved in the repair of mismatches in DNA. It is required for dam-dependent methyl-directed DNA mismatch repair. May act as a 'molecular matchmaker', a protein that promotes the formation of a stable complex between two or more DNA-binding proteins in an ATP-dependent manner without itself being part of a final effector complex. The sequence is that of DNA mismatch repair protein MutL from Endomicrobium trichonymphae.